The following is a 348-amino-acid chain: tRNA N6-adenosine threonylcarbamoyltransferase (348 aa).

Residues histidine 116 and histidine 120 each coordinate Fe cation. Residues 138–142 (IISGG), aspartate 171, glycine 184, and asparagine 282 each bind substrate. Position 310 (aspartate 310) interacts with Fe cation.

It belongs to the KAE1 / TsaD family. The cofactor is Fe(2+).

Its subcellular location is the cytoplasm. It carries out the reaction L-threonylcarbamoyladenylate + adenosine(37) in tRNA = N(6)-L-threonylcarbamoyladenosine(37) in tRNA + AMP + H(+). Required for the formation of a threonylcarbamoyl group on adenosine at position 37 (t(6)A37) in tRNAs that read codons beginning with adenine. Is involved in the transfer of the threonylcarbamoyl moiety of threonylcarbamoyl-AMP (TC-AMP) to the N6 group of A37, together with TsaE and TsaB. TsaD likely plays a direct catalytic role in this reaction. This Ehrlichia ruminantium (strain Gardel) protein is tRNA N6-adenosine threonylcarbamoyltransferase.